We begin with the raw amino-acid sequence, 305 residues long: Glycine--tRNA ligase alpha subunit (305 aa).

Belongs to the class-II aminoacyl-tRNA synthetase family. Tetramer of two alpha and two beta subunits.

It localises to the cytoplasm. The catalysed reaction is tRNA(Gly) + glycine + ATP = glycyl-tRNA(Gly) + AMP + diphosphate. This chain is Glycine--tRNA ligase alpha subunit, found in Heliobacterium modesticaldum (strain ATCC 51547 / Ice1).